The sequence spans 351 residues: Transmembrane protein DDB_G0272716 (351 aa).

Asn-4 and Asn-59 each carry an N-linked (GlcNAc...) asparagine glycan. Helical transmembrane passes span 175 to 195 and 215 to 235; these read FSSLFGVISGFLGIGSVTAIG and VVAPICAPVLLTFGCLVGAFI. An N-linked (GlcNAc...) asparagine glycan is attached at Asn-345.

It is found in the membrane. This chain is Transmembrane protein DDB_G0272716, found in Dictyostelium discoideum (Social amoeba).